The following is a 276-amino-acid chain: Formamidopyrimidine-DNA glycosylase (276 aa).

Proline 2 serves as the catalytic Schiff-base intermediate with DNA. The Proton donor role is filled by glutamate 3. Lysine 60 functions as the Proton donor; for beta-elimination activity in the catalytic mechanism. The DNA site is built by histidine 93 and arginine 112. The segment at 240–274 (NVYGKKGEPCVTCGTILEKTVVGGRGTHYCPICQP) adopts an FPG-type zinc-finger fold. Arginine 264 (proton donor; for delta-elimination activity) is an active-site residue.

The protein belongs to the FPG family. Monomer. The cofactor is Zn(2+).

It catalyses the reaction Hydrolysis of DNA containing ring-opened 7-methylguanine residues, releasing 2,6-diamino-4-hydroxy-5-(N-methyl)formamidopyrimidine.. It carries out the reaction 2'-deoxyribonucleotide-(2'-deoxyribose 5'-phosphate)-2'-deoxyribonucleotide-DNA = a 3'-end 2'-deoxyribonucleotide-(2,3-dehydro-2,3-deoxyribose 5'-phosphate)-DNA + a 5'-end 5'-phospho-2'-deoxyribonucleoside-DNA + H(+). Its function is as follows. Involved in base excision repair of DNA damaged by oxidation or by mutagenic agents. Acts as a DNA glycosylase that recognizes and removes damaged bases. Has a preference for oxidized purines, such as 7,8-dihydro-8-oxoguanine (8-oxoG). Has AP (apurinic/apyrimidinic) lyase activity and introduces nicks in the DNA strand. Cleaves the DNA backbone by beta-delta elimination to generate a single-strand break at the site of the removed base with both 3'- and 5'-phosphates. This is Formamidopyrimidine-DNA glycosylase from Bacillus cereus (strain ATCC 10987 / NRS 248).